A 170-amino-acid polypeptide reads, in one-letter code: Sec-independent protein translocase protein TatB (170 aa).

The chain crosses the membrane as a helical span at residues 1-21; the sequence is MIDFGFDKIALIGAVALIVIG. Residues 69–170 are disordered; sequence AARNVEQSVS…VARFRPPRPL (102 aa). Polar residues predominate over residues 73–93; that stretch reads VEQSVSSEVNRTSSEMNQAWE. The span at 128 to 137 shows a compositional bias: basic residues; that stretch reads HPRKNWRLKR.

The protein belongs to the TatB family. The Tat system comprises two distinct complexes: a TatABC complex, containing multiple copies of TatA, TatB and TatC subunits, and a separate TatA complex, containing only TatA subunits. Substrates initially bind to the TatABC complex, which probably triggers association of the separate TatA complex to form the active translocon.

Its subcellular location is the cell inner membrane. Its function is as follows. Part of the twin-arginine translocation (Tat) system that transports large folded proteins containing a characteristic twin-arginine motif in their signal peptide across membranes. Together with TatC, TatB is part of a receptor directly interacting with Tat signal peptides. TatB may form an oligomeric binding site that transiently accommodates folded Tat precursor proteins before their translocation. This Methylibium petroleiphilum (strain ATCC BAA-1232 / LMG 22953 / PM1) protein is Sec-independent protein translocase protein TatB.